A 238-amino-acid polypeptide reads, in one-letter code: 2,3,4,5-tetrahydropyridine-2,6-dicarboxylate N-acetyltransferase (238 aa).

This sequence belongs to the transferase hexapeptide repeat family. DapH subfamily.

The enzyme catalyses (S)-2,3,4,5-tetrahydrodipicolinate + acetyl-CoA + H2O = L-2-acetamido-6-oxoheptanedioate + CoA. It participates in amino-acid biosynthesis; L-lysine biosynthesis via DAP pathway; LL-2,6-diaminopimelate from (S)-tetrahydrodipicolinate (acetylase route): step 1/3. Functionally, catalyzes the transfer of an acetyl group from acetyl-CoA to tetrahydrodipicolinate. The sequence is that of 2,3,4,5-tetrahydropyridine-2,6-dicarboxylate N-acetyltransferase from Clostridioides difficile (strain 630) (Peptoclostridium difficile).